The primary structure comprises 132 residues: Small ribosomal subunit protein uS8 (132 aa).

It belongs to the universal ribosomal protein uS8 family. In terms of assembly, part of the 30S ribosomal subunit. Contacts proteins S5 and S12.

One of the primary rRNA binding proteins, it binds directly to 16S rRNA central domain where it helps coordinate assembly of the platform of the 30S subunit. In Leuconostoc mesenteroides subsp. mesenteroides (strain ATCC 8293 / DSM 20343 / BCRC 11652 / CCM 1803 / JCM 6124 / NCDO 523 / NBRC 100496 / NCIMB 8023 / NCTC 12954 / NRRL B-1118 / 37Y), this protein is Small ribosomal subunit protein uS8.